A 200-amino-acid polypeptide reads, in one-letter code: Small ribosomal subunit protein eS1 (200 aa).

This sequence belongs to the eukaryotic ribosomal protein eS1 family.

The polypeptide is Small ribosomal subunit protein eS1 (Thermococcus sibiricus (strain DSM 12597 / MM 739)).